Here is a 290-residue protein sequence, read N- to C-terminus: ATP synthase gamma chain (290 aa).

Belongs to the ATPase gamma chain family. In terms of assembly, F-type ATPases have 2 components, CF(1) - the catalytic core - and CF(0) - the membrane proton channel. CF(1) has five subunits: alpha(3), beta(3), gamma(1), delta(1), epsilon(1). CF(0) has three main subunits: a, b and c.

It is found in the cell membrane. Functionally, produces ATP from ADP in the presence of a proton gradient across the membrane. The gamma chain is believed to be important in regulating ATPase activity and the flow of protons through the CF(0) complex. The polypeptide is ATP synthase gamma chain (Rubrobacter xylanophilus (strain DSM 9941 / JCM 11954 / NBRC 16129 / PRD-1)).